We begin with the raw amino-acid sequence, 118 residues long: Ribulose bisphosphate carboxylase small subunit (118 aa).

Belongs to the RuBisCO small chain family. In terms of assembly, heterohexadecamer of 8 large and 8 small subunits.

In terms of biological role, ruBisCO catalyzes two reactions: the carboxylation of D-ribulose 1,5-bisphosphate, the primary event in carbon dioxide fixation, as well as the oxidative fragmentation of the pentose substrate. Both reactions occur simultaneously and in competition at the same active site. Although the small subunit is not catalytic it is essential for maximal activity. The sequence is that of Ribulose bisphosphate carboxylase small subunit from Rhodobacter capsulatus (Rhodopseudomonas capsulata).